A 111-amino-acid polypeptide reads, in one-letter code: BET1-like protein (111 aa).

Residues 1 to 86 (MADWARAQSP…MARSGRDNRK (86 aa)) are Cytoplasmic-facing. 2 positions are modified to phosphoserine: Ser-9 and Ser-37. In terms of domain architecture, t-SNARE coiled-coil homology spans 15 to 77 (EILDRENKRM…TGSVKRFSTM (63 aa)). The helical; Anchor for type IV membrane protein transmembrane segment at 87 to 107 (LLCGMAVGLIVAFFILSYFLS) threads the bilayer. Over 108–111 (RART) the chain is Lumenal.

Component of a SNARE complex consisting of STX5, YKT6, GOSR1 and BET1L. Interacts with STX5.

Its subcellular location is the golgi apparatus membrane. The protein resides in the golgi apparatus. The protein localises to the trans-Golgi network membrane. Its function is as follows. Vesicle SNARE required for targeting and fusion of retrograde transport vesicles with the Golgi complex. Required for the integrity of the Golgi complex. This chain is BET1-like protein, found in Pongo abelii (Sumatran orangutan).